The sequence spans 622 residues: Low affinity potassium transport system protein Kup (622 aa).

A run of 12 helical transmembrane segments spans residues 9–29 (LPAI…TSPL), 49–69 (VFGF…IKYL), 103–123 (VIMG…TPAI), 137–157 (PQLD…LFMI), 165–185 (VGKL…GLGL), 213–233 (VSFI…ALYA), 247–267 (WFTV…ALLL), 276–296 (PFFL…AALA), 337–357 (IYIP…IVSF), 363–383 (LAAA…ILST), 396–416 (FVAL…TANL), and 419–439 (LLSG…VMTT).

Belongs to the HAK/KUP transporter (TC 2.A.72) family.

The protein resides in the cell inner membrane. The catalysed reaction is K(+)(in) + H(+)(in) = K(+)(out) + H(+)(out). In terms of biological role, responsible for the low-affinity transport of potassium into the cell. Likely operates as a K(+):H(+) symporter. The polypeptide is Low affinity potassium transport system protein Kup (Shigella sonnei (strain Ss046)).